The sequence spans 312 residues: Olfactory receptor 867 (312 aa).

The Extracellular portion of the chain corresponds to 1–6 (MILNCN). A helical transmembrane segment spans residues 7–30 (PFSGLFLSMYLVTVLGNLLIILAV). Residues 31–38 (SSNSHLHN) are Cytoplasmic-facing. A helical membrane pass occupies residues 39 to 60 (LMYFFLSNLSFVDICFISTTIP). Residues 61 to 81 (KMLVNIHSQTKDISYIECLSQ) are Extracellular-facing. A disulfide bond links Cys-78 and Cys-160. A helical membrane pass occupies residues 82–101 (VYFLTTFGGMDNFLLTLMAC). Residues 102 to 120 (DRYVAICHPLNYTVIMNLQ) lie on the Cytoplasmic side of the membrane. The helical transmembrane segment at 121-139 (LCALLILMFWLIMFCVSLI) threads the bilayer. The Extracellular portion of the chain corresponds to 140-177 (HVLLMNELNFSRGTEIPHFFCELAQVLKVANSDTHINN). The N-linked (GlcNAc...) asparagine glycan is linked to Asn-148. Residues 178-200 (VFMYVVTSLLGLIPMTGILMSYS) form a helical membrane-spanning segment. Over 201-217 (QIASSLLKMSSSVSKYK) the chain is Cytoplasmic. Residues 218-241 (AFSTCGSHLCVVSLFYGSATIVYF) form a helical membrane-spanning segment. Residues 242-253 (CSSVLHSTHKKM) are Extracellular-facing. The chain crosses the membrane as a helical span at residues 254–273 (IASLMYTVISPMLNPFIYSL). The Cytoplasmic segment spans residues 274 to 312 (RNKDVKGALGKLFIRVASCPLWSKDFRPKFILKPERQSL).

Belongs to the G-protein coupled receptor 1 family. As to expression, epithelium of the tongue; including the taste buds.

The protein resides in the cell membrane. Its function is as follows. Possible olfactory or taste receptor. This is Olfactory receptor 867 (Olr867) from Rattus norvegicus (Rat).